The primary structure comprises 259 residues: Leucine-rich repeat-containing protein 61 (259 aa).

4 LRR repeats span residues 32 to 53 (SILL…GECL), 54 to 75 (GLEW…ASLR), 76 to 97 (QLAV…ATCE), and 98 to 119 (NLQS…QCLA). The LRRCT domain maps to 138–178 (NPLCANPSYWAAVRELLPGLKVIDGERVIGRGSEFYQLCRD).

The polypeptide is Leucine-rich repeat-containing protein 61 (LRRC61) (Homo sapiens (Human)).